A 272-amino-acid chain; its full sequence is MEMTQSSNHIVVIKLGGSVLDSKDTSLKDIATLKQLGLKPVLIHGGASTVSAWSAKLGLETRLVNGERVTDDATLDVVAAILAGLVNKEIVAALLDMGIKAAGISGVDSATITGQIRATETGYLGDVVQVNTELITALLDANITPVISPVSFHQINRPSGSRRLLNINGDPVAGEIASALQAERLVFLTDVPAVKGKNGEALGEISADHAAELLASGTASGGMIPKLRSCLKATLAGSSACIIDGRKPHMLIRELTEGNCGTTVTGQHLRRS.

Residues 46 to 47 (GA), Arg68, and Asn166 contribute to the substrate site.

The protein belongs to the acetylglutamate kinase family. ArgB subfamily.

The protein resides in the cytoplasm. The enzyme catalyses N-acetyl-L-glutamate + ATP = N-acetyl-L-glutamyl 5-phosphate + ADP. It functions in the pathway amino-acid biosynthesis; L-arginine biosynthesis; N(2)-acetyl-L-ornithine from L-glutamate: step 2/4. In terms of biological role, catalyzes the ATP-dependent phosphorylation of N-acetyl-L-glutamate. This Dehalococcoides mccartyi (strain CBDB1) protein is Acetylglutamate kinase.